A 796-amino-acid chain; its full sequence is Protein translocase subunit SecA 2 (796 aa).

ATP contacts are provided by residues Gln84, 102–106 (GEGKT), and Asp496.

The protein belongs to the SecA family. In terms of assembly, monomer and homodimer. Part of the essential Sec protein translocation apparatus which comprises SecA, SecYEG and auxiliary proteins SecDF. Other proteins may also be involved.

It is found in the cell membrane. The protein localises to the cytoplasm. It catalyses the reaction ATP + H2O + cellular proteinSide 1 = ADP + phosphate + cellular proteinSide 2.. In terms of biological role, part of the Sec protein translocase complex. Interacts with the SecYEG preprotein conducting channel. Has a central role in coupling the hydrolysis of ATP to the transfer of proteins into and across the cell membrane, serving as an ATP-driven molecular motor driving the stepwise translocation of polypeptide chains across the membrane. In Staphylococcus aureus (strain MRSA252), this protein is Protein translocase subunit SecA 2.